Reading from the N-terminus, the 120-residue chain is BolA-like protein 2 (120 aa).

The protein belongs to the BolA/IbaG family. As to quaternary structure, interacts with FRA1, GRX3 and GRX4.

The protein resides in the cytoplasm. It is found in the nucleus. Involved in the regulation of the iron regulon in response to decreased mitochondrial iron-sulfur cluster synthesis. May be involved in mitochondrial organization and biogenesis. This Saccharomyces cerevisiae (strain ATCC 204508 / S288c) (Baker's yeast) protein is BolA-like protein 2 (BOL2).